A 145-amino-acid polypeptide reads, in one-letter code: Late embryogenesis abundant protein D-11 (145 aa).

The segment covering 1-18 (MAHFQNQYSAPEVTQTDA) has biased composition (polar residues). The tract at residues 1-136 (MAHFQNQYSA…EAPWSPQPLI (136 aa)) is disordered. Over residues 47–57 (GHHHGGHHGLH) the composition is skewed to basic residues. Positions 58–68 (RTGSSSSSSSS) are enriched in low complexity. A compositionally biased stretch (basic and acidic residues) spans 82–96 (KERLKEKIPGNKEHQ). Residues 97–107 (SQATSTTTPGQ) show a composition bias toward polar residues.

The protein belongs to the plant dehydrin family.

In terms of biological role, LEA protein are late embryogenesis abundant in higher plant seed embryos. There are two subsets of LEA proteins (5a, and 5b), the first ones are expressed when the cotyledon weight reach 80 mg and the second set are expressed above 100 mg. The function of those proteins is not known. The chain is Late embryogenesis abundant protein D-11 from Gossypium hirsutum (Upland cotton).